The primary structure comprises 242 residues: 7-cyano-7-deazaguanine synthase (242 aa).

ATP is bound at residue 13–23 (FSGGQDSSVCL). Residues cysteine 201, cysteine 216, cysteine 219, and cysteine 222 each coordinate Zn(2+).

It belongs to the QueC family. Zn(2+) is required as a cofactor.

The enzyme catalyses 7-carboxy-7-deazaguanine + NH4(+) + ATP = 7-cyano-7-deazaguanine + ADP + phosphate + H2O + H(+). Its pathway is purine metabolism; 7-cyano-7-deazaguanine biosynthesis. In terms of biological role, catalyzes the ATP-dependent conversion of 7-carboxy-7-deazaguanine (CDG) to 7-cyano-7-deazaguanine (preQ(0)). The sequence is that of 7-cyano-7-deazaguanine synthase from Caulobacter vibrioides (strain ATCC 19089 / CIP 103742 / CB 15) (Caulobacter crescentus).